The following is a 386-amino-acid chain: Phosphoglycerate kinase (386 aa).

Residues 21–23, arginine 36, 59–62, arginine 113, and arginine 146 contribute to the substrate site; these read DLN and HLGR. Residues lysine 197, glutamate 314, and 340 to 343 contribute to the ATP site; that span reads GGDT.

Belongs to the phosphoglycerate kinase family. In terms of assembly, monomer.

The protein resides in the cytoplasm. It carries out the reaction (2R)-3-phosphoglycerate + ATP = (2R)-3-phospho-glyceroyl phosphate + ADP. The protein operates within carbohydrate degradation; glycolysis; pyruvate from D-glyceraldehyde 3-phosphate: step 2/5. The sequence is that of Phosphoglycerate kinase from Marinobacter nauticus (strain ATCC 700491 / DSM 11845 / VT8) (Marinobacter aquaeolei).